Reading from the N-terminus, the 317-residue chain is Apolipoprotein E (317 aa).

Residues 1 to 18 form the signal peptide; that stretch reads MKVLWAALLVTFLAGCQA. 8 repeat units span residues 80 to 101, 102 to 123, 124 to 145, 146 to 167, 168 to 189, 190 to 211, 212 to 233, and 234 to 255. Positions 80-255 are 8 X 22 AA approximate tandem repeats; the sequence is ALMDETMKEL…RLDEVKEQVA (176 aa). The residue at position 143 (Met-143) is a Methionine sulfoxide. At Ser-147 the chain carries Phosphoserine. An LDL and other lipoprotein receptors binding region spans residues 158-168; the sequence is HLRKLRKRLLR. 162-165 contributes to the heparin binding site; sequence LRKR. Residues 210-290 form a lipid-binding and lipoprotein association region; the sequence is AATVGSLAGQ…SWFEPLVEDM (81 aa). Residue 229–236 coordinates heparin; the sequence is GERLRARM. Residues 266–317 form a homooligomerization region; that stretch reads QQIRLQAEAFQARLKSWFEPLVEDMQRQWAGLVEKVQAAMGTSAAPVPSDNH. Residues 278-290 form a specificity for association with VLDL region; it reads RLKSWFEPLVEDM.

It belongs to the apolipoprotein A1/A4/E family. In terms of assembly, homotetramer. May interact with ABCA1; functionally associated with ABCA1 in the biogenesis of HDLs. May interact with APP/A4 amyloid-beta peptide; the interaction is extremely stable in vitro but its physiological significance is unclear. May interact with MAPT. May interact with MAP2. In the cerebrospinal fluid, interacts with secreted SORL1. Interacts with PMEL; this allows the loading of PMEL luminal fragment on ILVs to induce fibril nucleation. APOE exists as multiple glycosylated and sialylated glycoforms within cells and in plasma. The extent of glycosylation and sialylation are tissue and context specific. Post-translationally, glycated in plasma VLDL. In terms of processing, phosphorylated by FAM20C in the extracellular medium.

Its subcellular location is the secreted. The protein localises to the extracellular space. The protein resides in the extracellular matrix. It localises to the extracellular vesicle. It is found in the endosome. Its subcellular location is the multivesicular body. Functionally, APOE is an apolipoprotein, a protein associating with lipid particles, that mainly functions in lipoprotein-mediated lipid transport between organs via the plasma and interstitial fluids. APOE is a core component of plasma lipoproteins and is involved in their production, conversion and clearance. Apolipoproteins are amphipathic molecules that interact both with lipids of the lipoprotein particle core and the aqueous environment of the plasma. As such, APOE associates with chylomicrons, chylomicron remnants, very low density lipoproteins (VLDL) and intermediate density lipoproteins (IDL) but shows a preferential binding to high-density lipoproteins (HDL). It also binds a wide range of cellular receptors including the LDL receptor/LDLR, the LDL receptor-related proteins LRP1, LRP2 and LRP8 and the very low-density lipoprotein receptor/VLDLR that mediate the cellular uptake of the APOE-containing lipoprotein particles. Finally, APOE also has a heparin-binding activity and binds heparan-sulfate proteoglycans on the surface of cells, a property that supports the capture and the receptor-mediated uptake of APOE-containing lipoproteins by cells. A main function of APOE is to mediate lipoprotein clearance through the uptake of chylomicrons, VLDLs, and HDLs by hepatocytes. APOE is also involved in the biosynthesis by the liver of VLDLs as well as their uptake by peripheral tissues ensuring the delivery of triglycerides and energy storage in muscle, heart and adipose tissues. By participating in the lipoprotein-mediated distribution of lipids among tissues, APOE plays a critical role in plasma and tissues lipid homeostasis. APOE is also involved in two steps of reverse cholesterol transport, the HDLs-mediated transport of cholesterol from peripheral tissues to the liver, and thereby plays an important role in cholesterol homeostasis. First, it is functionally associated with ABCA1 in the biogenesis of HDLs in tissues. Second, it is enriched in circulating HDLs and mediates their uptake by hepatocytes. APOE also plays an important role in lipid transport in the central nervous system, regulating neuron survival and sprouting. This chain is Apolipoprotein E (APOE), found in Gorilla gorilla gorilla (Western lowland gorilla).